Here is a 369-residue protein sequence, read N- to C-terminus: Tetraacyldisaccharide 4'-kinase (369 aa).

Residue 68–75 participates in ATP binding; that stretch reads VVGGTGKT.

It belongs to the LpxK family.

The enzyme catalyses a lipid A disaccharide + ATP = a lipid IVA + ADP + H(+). Its pathway is glycolipid biosynthesis; lipid IV(A) biosynthesis; lipid IV(A) from (3R)-3-hydroxytetradecanoyl-[acyl-carrier-protein] and UDP-N-acetyl-alpha-D-glucosamine: step 6/6. Transfers the gamma-phosphate of ATP to the 4'-position of a tetraacyldisaccharide 1-phosphate intermediate (termed DS-1-P) to form tetraacyldisaccharide 1,4'-bis-phosphate (lipid IVA). In Chlamydia trachomatis serovar D (strain ATCC VR-885 / DSM 19411 / UW-3/Cx), this protein is Tetraacyldisaccharide 4'-kinase.